We begin with the raw amino-acid sequence, 308 residues long: Protein translocase subunit SecF (308 aa).

6 helical membrane-spanning segments follow: residues A22–Y42, I140–V160, W164–F184, L194–I214, I246–A266, and V272–I292.

It belongs to the SecD/SecF family. SecF subfamily. Forms a complex with SecD. Part of the essential Sec protein translocation apparatus which comprises SecA, SecYEG and auxiliary proteins SecDF-YajC and YidC.

The protein localises to the cell inner membrane. Part of the Sec protein translocase complex. Interacts with the SecYEG preprotein conducting channel. SecDF uses the proton motive force (PMF) to complete protein translocation after the ATP-dependent function of SecA. The polypeptide is Protein translocase subunit SecF (Rickettsia akari (strain Hartford)).